The chain runs to 274 residues: Large ribosomal subunit protein uL2 (274 aa).

Residues 221–256 (RGTAMNPVDHPHGGGEGRNFGKHPVTPWGVPTKGYK) are disordered.

This sequence belongs to the universal ribosomal protein uL2 family. Part of the 50S ribosomal subunit. Forms a bridge to the 30S subunit in the 70S ribosome.

In terms of biological role, one of the primary rRNA binding proteins. Required for association of the 30S and 50S subunits to form the 70S ribosome, for tRNA binding and peptide bond formation. It has been suggested to have peptidyltransferase activity; this is somewhat controversial. Makes several contacts with the 16S rRNA in the 70S ribosome. This is Large ribosomal subunit protein uL2 from Hahella chejuensis (strain KCTC 2396).